The following is a 264-amino-acid chain: S-adenosylmethionine decarboxylase proenzyme (264 aa).

Residue Ser-114 is the Schiff-base intermediate with substrate; via pyruvic acid of the active site. Ser-114 is subject to Pyruvic acid (Ser); by autocatalysis. His-119 serves as the catalytic Proton acceptor; for processing activity. Residue Cys-142 is the Proton donor; for catalytic activity of the active site.

It belongs to the prokaryotic AdoMetDC family. Type 2 subfamily. As to quaternary structure, heterooctamer of four alpha and four beta chains arranged as a tetramer of alpha/beta heterodimers. Requires pyruvate as cofactor. In terms of processing, is synthesized initially as an inactive proenzyme. Formation of the active enzyme involves a self-maturation process in which the active site pyruvoyl group is generated from an internal serine residue via an autocatalytic post-translational modification. Two non-identical subunits are generated from the proenzyme in this reaction, and the pyruvate is formed at the N-terminus of the alpha chain, which is derived from the carboxyl end of the proenzyme. The post-translation cleavage follows an unusual pathway, termed non-hydrolytic serinolysis, in which the side chain hydroxyl group of the serine supplies its oxygen atom to form the C-terminus of the beta chain, while the remainder of the serine residue undergoes an oxidative deamination to produce ammonia and the pyruvoyl group blocking the N-terminus of the alpha chain.

It catalyses the reaction S-adenosyl-L-methionine + H(+) = S-adenosyl 3-(methylsulfanyl)propylamine + CO2. The protein operates within amine and polyamine biosynthesis; S-adenosylmethioninamine biosynthesis; S-adenosylmethioninamine from S-adenosyl-L-methionine: step 1/1. Catalyzes the decarboxylation of S-adenosylmethionine to S-adenosylmethioninamine (dcAdoMet), the propylamine donor required for the synthesis of the polyamines spermine and spermidine from the diamine putrescine. This is S-adenosylmethionine decarboxylase proenzyme from Chromohalobacter salexigens (strain ATCC BAA-138 / DSM 3043 / CIP 106854 / NCIMB 13768 / 1H11).